We begin with the raw amino-acid sequence, 164 residues long: FMN reductase (NADH) RutF (164 aa).

This sequence belongs to the non-flavoprotein flavin reductase family. RutF subfamily.

It catalyses the reaction FMNH2 + NAD(+) = FMN + NADH + 2 H(+). Catalyzes the reduction of FMN to FMNH2 which is used to reduce pyrimidine by RutA via the Rut pathway. The sequence is that of FMN reductase (NADH) RutF from Klebsiella pneumoniae subsp. pneumoniae (strain ATCC 700721 / MGH 78578).